The chain runs to 296 residues: 4-hydroxybenzoate octaprenyltransferase (296 aa).

The next 8 membrane-spanning stretches (helical) occupy residues 23-43 (IGIL…SPGW), 46-66 (GLVL…GCVM), 99-119 (LALA…PLVV), 141-161 (IPQA…FAAI), 163-183 (GQLP…AIAY), 211-231 (DVFA…WVGV), 237-257 (WPYF…YALI), and 265-285 (CFKA…GVLA).

The protein belongs to the UbiA prenyltransferase family. It depends on Mg(2+) as a cofactor.

Its subcellular location is the cell inner membrane. It catalyses the reaction all-trans-octaprenyl diphosphate + 4-hydroxybenzoate = 4-hydroxy-3-(all-trans-octaprenyl)benzoate + diphosphate. It participates in cofactor biosynthesis; ubiquinone biosynthesis. Catalyzes the prenylation of para-hydroxybenzoate (PHB) with an all-trans polyprenyl group. Mediates the second step in the final reaction sequence of ubiquinone-8 (UQ-8) biosynthesis, which is the condensation of the polyisoprenoid side chain with PHB, generating the first membrane-bound Q intermediate 3-octaprenyl-4-hydroxybenzoate. The chain is 4-hydroxybenzoate octaprenyltransferase from Methylobacillus flagellatus (strain ATCC 51484 / DSM 6875 / VKM B-1610 / KT).